A 150-amino-acid polypeptide reads, in one-letter code: Urease subunit beta (150 aa).

A compositionally biased stretch (low complexity) spans 122-140; sequence GAVVGDSPAATPGTTGATG. The tract at residues 122-150 is disordered; it reads GAVVGDSPAATPGTTGATGDLPGYLGEGS.

It belongs to the urease beta subunit family. In terms of assembly, heterotrimer of UreA (gamma), UreB (beta) and UreC (alpha) subunits. Three heterotrimers associate to form the active enzyme.

The protein localises to the cytoplasm. The enzyme catalyses urea + 2 H2O + H(+) = hydrogencarbonate + 2 NH4(+). Its pathway is nitrogen metabolism; urea degradation; CO(2) and NH(3) from urea (urease route): step 1/1. In Frankia alni (strain DSM 45986 / CECT 9034 / ACN14a), this protein is Urease subunit beta.